The sequence spans 157 residues: MGIIDFLLALMQDMILSAIPAVGFAMVFNVPHRALPWCALLGALGHGSRMLMMSAGFNIEWSTFMASLLVGSIGIQWSRWYLAHPKVFTVAAVIPMFPGISAYTAMISAVKISHLGYSEPMMITLLTNFLKASSIVGALSIGLSVPGLWLYRKRPRV.

The next 4 helical transmembrane spans lie at 8–28, 55–75, 87–107, and 129–149; these read LALM…AMVF, AGFN…SIGI, VFTV…TAMI, and FLKA…PGLW.

It belongs to the ThrE exporter (TC 2.A.79) family. In terms of assembly, the transporter is composed of YjjB and YjjP.

It is found in the cell inner membrane. Involved in succinate export with YjjP. Both proteins are required for export. The sequence is that of Probable succinate transporter subunit YjjB from Salmonella agona (strain SL483).